A 222-amino-acid polypeptide reads, in one-letter code: Probable GTP-binding protein EngB (222 aa).

In terms of domain architecture, EngB-type G spans 23–217 (NASEIVFLGR…REEIVKYTLG (195 aa)). GTP contacts are provided by residues 31–38 (GRSNVGKS), 57–61 (GKTQL), 82–85 (DLPG), 152–155 (TKAD), and 191–193 (FSA). Mg(2+) is bound by residues Ser-38 and Thr-59.

It belongs to the TRAFAC class TrmE-Era-EngA-EngB-Septin-like GTPase superfamily. EngB GTPase family. Mg(2+) serves as cofactor.

Its function is as follows. Necessary for normal cell division and for the maintenance of normal septation. In Helicobacter hepaticus (strain ATCC 51449 / 3B1), this protein is Probable GTP-binding protein EngB.